The chain runs to 169 residues: Cytochrome c oxidase subunit 4 isoform 1, mitochondrial (169 aa).

Residues 1–22 constitute a mitochondrion transit peptide; sequence MLATRALSLIGKRAISTSVCLR. The Mitochondrial matrix portion of the chain corresponds to 23–98; sequence AHGSVVKSED…SFAEMNKGTN (76 aa). At Lys-29 the chain carries N6-acetyllysine; alternate. Lys-29 is subject to N6-succinyllysine; alternate. The residue at position 53 (Lys-53) is an N6-acetyllysine. Residues Ser-56 and Ser-58 each carry the phosphoserine modification. Lys-60 is modified (N6-acetyllysine; alternate). Lys-60 carries the N6-succinyllysine; alternate modification. Lys-67 is modified (N6-acetyllysine). The helical transmembrane segment at 99–124 threads the bilayer; the sequence is EWKTVVGLAMFFIGFTALVLIWEKSY. Residues 125–169 lie on the Mitochondrial intermembrane side of the membrane; sequence VYGPIPHTFDRDWVAMQTKRMLDMKVNPIQGFSAKWDYNKNEWKK.

Belongs to the cytochrome c oxidase IV family. Component of the cytochrome c oxidase (complex IV, CIV), a multisubunit enzyme composed of 14 subunits. The complex is composed of a catalytic core of 3 subunits MT-CO1, MT-CO2 and MT-CO3, encoded in the mitochondrial DNA, and 11 supernumerary subunits COX4I, COX5A, COX5B, COX6A, COX6B, COX6C, COX7A, COX7B, COX7C, COX8 and NDUFA4, which are encoded in the nuclear genome. The complex exists as a monomer or a dimer and forms supercomplexes (SCs) in the inner mitochondrial membrane with NADH-ubiquinone oxidoreductase (complex I, CI) and ubiquinol-cytochrome c oxidoreductase (cytochrome b-c1 complex, complex III, CIII), resulting in different assemblies (supercomplex SCI(1)III(2)IV(1) and megacomplex MCI(2)III(2)IV(2)). Interacts with PHB2; the interaction decreases in absence of SPHK2. Interacts with AFG1L. Interacts with ABCB7; this interaction allows the regulation of cellular iron homeostasis and cellular reactive oxygen species (ROS) levels in cardiomyocytes. Interacts with FLVCR2; this interaction occurs in the absence of heme and is disrupted upon heme binding. Interacts with IRGC.

The protein resides in the mitochondrion inner membrane. Its pathway is energy metabolism; oxidative phosphorylation. Its function is as follows. Component of the cytochrome c oxidase, the last enzyme in the mitochondrial electron transport chain which drives oxidative phosphorylation. The respiratory chain contains 3 multisubunit complexes succinate dehydrogenase (complex II, CII), ubiquinol-cytochrome c oxidoreductase (cytochrome b-c1 complex, complex III, CIII) and cytochrome c oxidase (complex IV, CIV), that cooperate to transfer electrons derived from NADH and succinate to molecular oxygen, creating an electrochemical gradient over the inner membrane that drives transmembrane transport and the ATP synthase. Cytochrome c oxidase is the component of the respiratory chain that catalyzes the reduction of oxygen to water. Electrons originating from reduced cytochrome c in the intermembrane space (IMS) are transferred via the dinuclear copper A center (CU(A)) of subunit 2 and heme A of subunit 1 to the active site in subunit 1, a binuclear center (BNC) formed by heme A3 and copper B (CU(B)). The BNC reduces molecular oxygen to 2 water molecules using 4 electrons from cytochrome c in the IMS and 4 protons from the mitochondrial matrix. The polypeptide is Cytochrome c oxidase subunit 4 isoform 1, mitochondrial (Cox4i1) (Rattus norvegicus (Rat)).